Here is a 668-residue protein sequence, read N- to C-terminus: Threonine--tRNA ligase (668 aa).

One can recognise a TGS domain in the interval 1 to 61 (MSDLKIALTH…ADGDQVEPVA (61 aa)). A catalytic region spans residues 265–564 (DHRKLGRDLD…LVEHYAGAFP (300 aa)). The Zn(2+) site is built by cysteine 358, histidine 409, and histidine 541.

This sequence belongs to the class-II aminoacyl-tRNA synthetase family. As to quaternary structure, homodimer. The cofactor is Zn(2+).

Its subcellular location is the cytoplasm. It carries out the reaction tRNA(Thr) + L-threonine + ATP = L-threonyl-tRNA(Thr) + AMP + diphosphate + H(+). Catalyzes the attachment of threonine to tRNA(Thr) in a two-step reaction: L-threonine is first activated by ATP to form Thr-AMP and then transferred to the acceptor end of tRNA(Thr). Also edits incorrectly charged L-seryl-tRNA(Thr). This Nocardioides sp. (strain ATCC BAA-499 / JS614) protein is Threonine--tRNA ligase.